Reading from the N-terminus, the 299-residue chain is Aliphatic sulfonates import ATP-binding protein SsuB (299 aa).

The region spanning 36–257 (LHVQQVIKRY…QHGSAAFAQI (222 aa)) is the ABC transporter domain. 68–75 (GRSGCGKS) contributes to the ATP binding site.

The protein belongs to the ABC transporter superfamily. Aliphatic sulfonates importer (TC 3.A.1.17.2) family. In terms of assembly, the complex is composed of two ATP-binding proteins (SsuB), two transmembrane proteins (SsuC) and a solute-binding protein (SsuA).

It is found in the cell inner membrane. The enzyme catalyses ATP + H2O + aliphatic sulfonate-[sulfonate-binding protein]Side 1 = ADP + phosphate + aliphatic sulfonateSide 2 + [sulfonate-binding protein]Side 1.. In terms of biological role, part of the ABC transporter complex SsuABC involved in aliphatic sulfonates import. Responsible for energy coupling to the transport system. The polypeptide is Aliphatic sulfonates import ATP-binding protein SsuB (Cupriavidus pinatubonensis (strain JMP 134 / LMG 1197) (Cupriavidus necator (strain JMP 134))).